A 278-amino-acid polypeptide reads, in one-letter code: Myb/SANT-like DNA-binding domain-containing protein 1 (278 aa).

The tract at residues 1-27 (MVRGAGPGPSLSALSHPTGASGMAAAE) is disordered. A Myb-like domain is found at 44 to 129 (RNWTDAEMRG…PDWPYYLAID (86 aa)). Residues 138-168 (SCDGKLPDSQPPGPSTSQTEASLSPPAKSTP) form a disordered region.

This Homo sapiens (Human) protein is Myb/SANT-like DNA-binding domain-containing protein 1 (MSANTD1).